Here is a 667-residue protein sequence, read N- to C-terminus: DNA ligase (667 aa).

NAD(+) contacts are provided by residues 32 to 36 (DSEYD), 81 to 82 (SL), and Glu-110. Lys-112 serves as the catalytic N6-AMP-lysine intermediate. NAD(+)-binding residues include Arg-133, Glu-167, Lys-283, and Lys-307. Residues Cys-401, Cys-404, Cys-419, and Cys-424 each coordinate Zn(2+). One can recognise a BRCT domain in the interval 586-667 (EGHPEFSGKT…FVDKQNELNS (82 aa)).

The protein belongs to the NAD-dependent DNA ligase family. LigA subfamily. Mg(2+) is required as a cofactor. The cofactor is Mn(2+).

The catalysed reaction is NAD(+) + (deoxyribonucleotide)n-3'-hydroxyl + 5'-phospho-(deoxyribonucleotide)m = (deoxyribonucleotide)n+m + AMP + beta-nicotinamide D-nucleotide.. In terms of biological role, DNA ligase that catalyzes the formation of phosphodiester linkages between 5'-phosphoryl and 3'-hydroxyl groups in double-stranded DNA using NAD as a coenzyme and as the energy source for the reaction. It is essential for DNA replication and repair of damaged DNA. This chain is DNA ligase, found in Staphylococcus aureus (strain COL).